Reading from the N-terminus, the 227-residue chain is Sperm-associated antigen 7 (227 aa).

A disordered region spans residues 1–45; it reads MADLLGSILSSMEKPPSLGDQESRRKAREQAARLKKLQEQDKQQK. At A2 the chain carries N-acetylalanine. A compositionally biased stretch (basic and acidic residues) spans 21–45; the sequence is QESRRKAREQAARLKKLQEQDKQQK. Positions 35-51 match the Nuclear localization signal motif; the sequence is KKLQEQDKQQKVEFRKR. An R3H domain is found at 46–109; sequence VEFRKRMEKE…DCRYVMIFKK (64 aa). The residue at position 114 (S114) is a Phosphoserine. A disordered region spans residues 118–161; the sequence is LDSYRHGEEWDPQKAEEKRKLKELAQKQEEEAAQQGPAVVSPAS. The segment covering 119–147 has biased composition (basic and acidic residues); it reads DSYRHGEEWDPQKAEEKRKLKELAQKQEE. Residues 122 to 139 carry the Nuclear localization signal motif; the sequence is RHGEEWDPQKAEEKRKLK. 2 positions are modified to phosphoserine: S158 and S202.

The protein localises to the nucleus. The chain is Sperm-associated antigen 7 (Spag7) from Mus musculus (Mouse).